Reading from the N-terminus, the 222-residue chain is Deoxyribose-phosphate aldolase (222 aa).

The Proton donor/acceptor role is filled by D92. K156 serves as the catalytic Schiff-base intermediate with acetaldehyde. K185 acts as the Proton donor/acceptor in catalysis.

This sequence belongs to the DeoC/FbaB aldolase family. DeoC type 1 subfamily. In terms of assembly, homodimer.

It localises to the cytoplasm. The catalysed reaction is 2-deoxy-D-ribose 5-phosphate = D-glyceraldehyde 3-phosphate + acetaldehyde. Its pathway is carbohydrate degradation; 2-deoxy-D-ribose 1-phosphate degradation; D-glyceraldehyde 3-phosphate and acetaldehyde from 2-deoxy-alpha-D-ribose 1-phosphate: step 2/2. Its activity is regulated as follows. Shows high stability to high concentrations of acetaldehyde. Functionally, catalyzes a reversible aldol reaction between acetaldehyde and D-glyceraldehyde 3-phosphate to generate 2-deoxy-D-ribose 5-phosphate. In Aciduliprofundum boonei (strain DSM 19572 / T469), this protein is Deoxyribose-phosphate aldolase.